Reading from the N-terminus, the 89-residue chain is Large ribosomal subunit protein bL31B (89 aa).

Belongs to the bacterial ribosomal protein bL31 family. Type B subfamily. As to quaternary structure, part of the 50S ribosomal subunit.

The sequence is that of Large ribosomal subunit protein bL31B from Aeromonas hydrophila subsp. hydrophila (strain ATCC 7966 / DSM 30187 / BCRC 13018 / CCUG 14551 / JCM 1027 / KCTC 2358 / NCIMB 9240 / NCTC 8049).